A 157-amino-acid chain; its full sequence is Protein Smg (157 aa).

This sequence belongs to the Smg family.

The sequence is that of Protein Smg from Enterobacter sp. (strain 638).